Reading from the N-terminus, the 414-residue chain is Gamma-glutamyl phosphate reductase (414 aa).

It belongs to the gamma-glutamyl phosphate reductase family.

Its subcellular location is the cytoplasm. It catalyses the reaction L-glutamate 5-semialdehyde + phosphate + NADP(+) = L-glutamyl 5-phosphate + NADPH + H(+). The protein operates within amino-acid biosynthesis; L-proline biosynthesis; L-glutamate 5-semialdehyde from L-glutamate: step 2/2. Catalyzes the NADPH-dependent reduction of L-glutamate 5-phosphate into L-glutamate 5-semialdehyde and phosphate. The product spontaneously undergoes cyclization to form 1-pyrroline-5-carboxylate. This Clostridium botulinum (strain Alaska E43 / Type E3) protein is Gamma-glutamyl phosphate reductase.